The primary structure comprises 607 residues: UvrABC system protein C (607 aa).

Residues 19-97 (TLSGVYQMRD…IKQYQPKFNI (79 aa)) form the GIY-YIG domain. One can recognise a UVR domain in the interval 205 to 240 (EHLLQTLTEHMLQASAAQQYERAAIVRDQISELRTI).

The protein belongs to the UvrC family. As to quaternary structure, interacts with UvrB in an incision complex.

It is found in the cytoplasm. In terms of biological role, the UvrABC repair system catalyzes the recognition and processing of DNA lesions. UvrC both incises the 5' and 3' sides of the lesion. The N-terminal half is responsible for the 3' incision and the C-terminal half is responsible for the 5' incision. The protein is UvrABC system protein C of Dichelobacter nodosus (strain VCS1703A).